The primary structure comprises 137 residues: Nucleoside diphosphate kinase (137 aa).

ATP-binding residues include K9, F57, R85, T91, R102, and N112. H115 serves as the catalytic Pros-phosphohistidine intermediate.

This sequence belongs to the NDK family. In terms of assembly, homotetramer. Mg(2+) serves as cofactor.

It is found in the cytoplasm. The enzyme catalyses a 2'-deoxyribonucleoside 5'-diphosphate + ATP = a 2'-deoxyribonucleoside 5'-triphosphate + ADP. It catalyses the reaction a ribonucleoside 5'-diphosphate + ATP = a ribonucleoside 5'-triphosphate + ADP. Its function is as follows. Major role in the synthesis of nucleoside triphosphates other than ATP. The ATP gamma phosphate is transferred to the NDP beta phosphate via a ping-pong mechanism, using a phosphorylated active-site intermediate. The protein is Nucleoside diphosphate kinase of Campylobacter jejuni subsp. jejuni serotype O:23/36 (strain 81-176).